The sequence spans 179 residues: Cell division protein SepF (179 aa).

The segment at 19–55 (DSSLPYEKRDEPVFTSVNSSQEPALPMNQPSQSAGAK) is disordered. Positions 33–55 (TSVNSSQEPALPMNQPSQSAGAK) are enriched in polar residues.

Belongs to the SepF family. As to quaternary structure, homodimer. Interacts with FtsZ.

The protein localises to the cytoplasm. Functionally, cell division protein that is part of the divisome complex and is recruited early to the Z-ring. Probably stimulates Z-ring formation, perhaps through the cross-linking of FtsZ protofilaments. Its function overlaps with FtsA. This chain is Cell division protein SepF, found in Streptococcus pneumoniae (strain JJA).